The sequence spans 807 residues: Glycerol-3-phosphate acyltransferase (807 aa).

The short motif at cysteine 308–methionine 313 is the HXXXXD motif element.

It belongs to the GPAT/DAPAT family.

The protein resides in the cell inner membrane. It carries out the reaction sn-glycerol 3-phosphate + an acyl-CoA = a 1-acyl-sn-glycero-3-phosphate + CoA. Its pathway is phospholipid metabolism; CDP-diacylglycerol biosynthesis; CDP-diacylglycerol from sn-glycerol 3-phosphate: step 1/3. This Shewanella denitrificans (strain OS217 / ATCC BAA-1090 / DSM 15013) protein is Glycerol-3-phosphate acyltransferase.